We begin with the raw amino-acid sequence, 116 residues long: RutC family protein HI_1627 (116 aa).

This sequence belongs to the RutC family.

The protein is RutC family protein HI_1627 of Haemophilus influenzae (strain ATCC 51907 / DSM 11121 / KW20 / Rd).